The primary structure comprises 439 residues: tRNA modification GTPase MnmE (439 aa).

(6S)-5-formyl-5,6,7,8-tetrahydrofolate is bound by residues R23, E80, and K120. A TrmE-type G domain is found at 217–365 (GLKIVIAGEP…LLTALQSHLP (149 aa)). N227 provides a ligand contact to K(+). Residues 227–232 (NAGKSS), 246–252 (TEVAGTT), and 271–274 (DTAG) each bind GTP. S231 is a Mg(2+) binding site. K(+) is bound by residues T246, V248, and T251. T252 serves as a coordination point for Mg(2+). K439 is a (6S)-5-formyl-5,6,7,8-tetrahydrofolate binding site.

Belongs to the TRAFAC class TrmE-Era-EngA-EngB-Septin-like GTPase superfamily. TrmE GTPase family. In terms of assembly, homodimer. Heterotetramer of two MnmE and two MnmG subunits. It depends on K(+) as a cofactor.

The protein resides in the cytoplasm. In terms of biological role, exhibits a very high intrinsic GTPase hydrolysis rate. Involved in the addition of a carboxymethylaminomethyl (cmnm) group at the wobble position (U34) of certain tRNAs, forming tRNA-cmnm(5)s(2)U34. The chain is tRNA modification GTPase MnmE from Rhizobium meliloti (strain 1021) (Ensifer meliloti).